The primary structure comprises 249 residues: DNA repair protein RecO (249 aa).

Belongs to the RecO family.

In terms of biological role, involved in DNA repair and RecF pathway recombination. This Polaromonas naphthalenivorans (strain CJ2) protein is DNA repair protein RecO.